The following is a 226-amino-acid chain: ATP synthase subunit a (226 aa).

A run of 6 helical transmembrane segments spans residues 18 to 38 (FITG…SLGA), 79 to 99 (LAGT…IPGF), 105 to 125 (SWSF…FEGI), 134 to 154 (FAHF…IEII), 179 to 199 (LIML…VLFF), and 201 to 221 (GILQ…GAVL).

Belongs to the ATPase A chain family. F-type ATPases have 2 components, CF(1) - the catalytic core - and CF(0) - the membrane proton channel. CF(1) has five subunits: alpha(3), beta(3), gamma(1), delta(1), epsilon(1). CF(0) has three main subunits: a(1), b(2) and c(9-12). The alpha and beta chains form an alternating ring which encloses part of the gamma chain. CF(1) is attached to CF(0) by a central stalk formed by the gamma and epsilon chains, while a peripheral stalk is formed by the delta and b chains.

It is found in the cell inner membrane. Functionally, key component of the proton channel; it plays a direct role in the translocation of protons across the membrane. In Helicobacter pylori (strain HPAG1), this protein is ATP synthase subunit a.